The primary structure comprises 522 residues: ARS-binding protein 1 (522 aa).

The 75-residue stretch at 70–144 folds into the HTH CENPB-type domain; that stretch reads DVKRNRPPKY…RKRHILHAIN (75 aa). Thr-460 bears the Phosphothreonine mark.

In terms of assembly, interacts with mcm10.

It is found in the nucleus. Its function is as follows. Binds, preferentially, to the Maundrell ARS consensus sequence within ARS3002. This is ARS-binding protein 1 (abp1) from Schizosaccharomyces pombe (strain 972 / ATCC 24843) (Fission yeast).